The following is a 100-amino-acid chain: UPF0213 protein YhbQ (100 aa).

One can recognise a GIY-YIG domain in the interval 2–77 (TPWFLYLIRT…KQLTKRQKER (76 aa)).

It belongs to the UPF0213 family.

This is UPF0213 protein YhbQ from Escherichia coli (strain K12 / MC4100 / BW2952).